Reading from the N-terminus, the 374-residue chain is Pectate lyase 3 (374 aa).

Residues 1-22 (MKYLLPSAAAGLLLLAAQPTMA) form the signal peptide. A disulfide bond links cysteine 93 and cysteine 176. Aspartate 150, aspartate 152, glutamate 187, and aspartate 191 together coordinate Ca(2+). Arginine 239 is an active-site residue. Cysteine 350 and cysteine 373 are disulfide-bonded.

This sequence belongs to the polysaccharide lyase 1 family. PLADES subfamily. Requires Ca(2+) as cofactor.

It is found in the secreted. It catalyses the reaction Eliminative cleavage of (1-&gt;4)-alpha-D-galacturonan to give oligosaccharides with 4-deoxy-alpha-D-galact-4-enuronosyl groups at their non-reducing ends.. Its pathway is glycan metabolism; pectin degradation; 2-dehydro-3-deoxy-D-gluconate from pectin: step 2/5. Involved in maceration and soft-rotting of plant tissue. The chain is Pectate lyase 3 (pel3) from Pectobacterium carotovorum (Erwinia carotovora).